Here is a 272-residue protein sequence, read N- to C-terminus: Tryptophan synthase alpha chain (272 aa).

Catalysis depends on proton acceptor residues glutamate 49 and aspartate 60.

It belongs to the TrpA family. In terms of assembly, tetramer of two alpha and two beta chains.

The enzyme catalyses (1S,2R)-1-C-(indol-3-yl)glycerol 3-phosphate + L-serine = D-glyceraldehyde 3-phosphate + L-tryptophan + H2O. The protein operates within amino-acid biosynthesis; L-tryptophan biosynthesis; L-tryptophan from chorismate: step 5/5. Functionally, the alpha subunit is responsible for the aldol cleavage of indoleglycerol phosphate to indole and glyceraldehyde 3-phosphate. This Polaromonas sp. (strain JS666 / ATCC BAA-500) protein is Tryptophan synthase alpha chain.